The chain runs to 727 residues: MNHSPLKTALAYECFQDQDNSTLALPSDQKMKTGTSGRQRVQEQVMMTVKRQKSKSSQSSTLSHSNRGSMYDGLADSYNNYGTSSRSSFYSKFQAGSGSWGYPIYNGTLKREADNRRFSSYSQMESWGRQYPRGGCTAAGAGSDICFMQKIKASRSEPDLYCDPRGTLRKGTLGGKGHKTTQNRYSFYSTCSGQKAVKKYPGRPPSCTSRQDPVCVPPTSCTKDLSFSHSRASSKICSEDIECSGLTIPKAVQYLSSQDEKCQAIGAYYIQHTCFQDESAKQQVYQLGGICKLVDLLRSPNQNVQQAAAGALRNLVFRSTTNKLETRRQNGIREAVSLLRRTGSTEIQKQLTGLLWNLSSTDELKEELIAEALPVLADRVIIPFSGWCDGNSNLSREPVDPEVFFNATGCLRNLSSADVGRQTMRNYTGLIDSLMAYVQNCVAANRCDDKSVENCMCVLHNLSYRLDAEVPTRYRQLEYNARNAYTDKSSTGCFSNKSDRMTNNNYDCPLPEEEPNPKGSSWLYHSDAVRTYLNLMGKSKKDATLEACAGALQNLTASKGLMSSGMSQLIGLKEKGLPHIARLLQSGNSDVVRSGASLLSNMSRHPALHRVMGTQVFPEVTRLLTSHTGNTSNSEDILASACYTVRNLMASLPGMAKQHFSSSMVNNIINLCRSSTSPKAAEAARLLLSDMWSSRELQGLLRQQGFDRSMLGTLAGANSLRNFTSRF.

The required for binding to single stranded DNA stretch occupies residues 1-235 (MNHSPLKTAL…SFSHSRASSK (235 aa)). Residues 1–287 (MNHSPLKTAL…ESAKQQVYQL (287 aa)) are required for interaction with EIF4A1. S4 bears the Phosphoserine mark. The segment at 48–69 (TVKRQKSKSSQSSTLSHSNRGS) is disordered. Phosphorylation in this region is required for cytoplasmic localization and protein stabilization stretches follow at residues 54–69 (SKSS…NRGS) and 117–192 (RFSS…STCS). Phosphoserine is present on residues S119, S120, S122, and S143. A required for WNT-mediated nuclear localization region spans residues 161–270 (YCDPRGTLRK…KCQAIGAYYI (110 aa)). ARM repeat units lie at residues 244–275 (SGLT…HTCF), 276–317 (QDES…NLVF), 318–360 (RSTT…NLSS), 361–412 (TDEL…GCLR), 413–443 (NLSS…NCVA), 505–536 (NYDC…LNLM), 537–583 (GKSK…IARL), 584–629 (LQSG…SHTG), and 630–693 (NTSN…DMWS).

Belongs to the beta-catenin family. In terms of assembly, part of a complex that contains DSG3, PKP1, YAP1 and YWHAG; the complex is required for localization of DSG3 and YAP1 to the cell membrane in keratinocytes. Interacts (via N-terminus) with KRT5/CK5, KRT8/CK8 (via rod domain), KRT15/CK15 and KRT18/CK18 (via rod domain) as part of intermediate filaments. Interacts with VIM (via rod domain). Interacts with DSP. Interacts with DES. Interacts with FXR1; the interaction may facilitate the binding of PKP1 to PKP2, PKP3 and DSP mRNA. Interacts (via N-terminus) with EIF4A1; the interaction promotes EIF4A1 recruitment to the cap-dependent translation complex and EIF4A1 ATPase activity. Interacts with TJP1/ZO-1; the interaction facilitates TJP1/ZO-1 localization to the plasma membrane. Interacts (when phosphorylated) with YWHAG; the interaction results in translocation of PKP1 to the cytoplasm and loss of intercellular adhesion in keratinocytes. Phosphorylated by AKT2; required for interaction with YWHAG and subsequent localization away from desmosomes to the cytoplasm. Phosphorylation of Ser-119 by AKT2 promotes PKP1-driven cap-dependent mRNA translation and decreases intercellular adhesion, phosphorylation is promoted by insulin. Phosphorylation by RIPK4 at the N-terminus is required for its role in differentiation of keratinocytes and DSG1 localization at cell junctions.

Its subcellular location is the nucleus. The protein localises to the cytoplasm. It is found in the perinuclear region. The protein resides in the cell junction. It localises to the desmosome. Its subcellular location is the cell membrane. The protein localises to the stress granule. Functionally, a component of desmosome cell-cell junctions which are required for positive regulation of cellular adhesion. Plays a role in desmosome protein expression regulation and localization to the desmosomal plaque, thereby maintaining cell sheet integrity and anchorage of desmosomes to intermediate filaments. Required for localization of DSG3 and YAP1 to the cell membrane in keratinocytes in response to mechanical strain, via the formation of an interaction complex composed of DSG3, YAP1, PKP1 and YWHAG. Positively regulates differentiation of keratinocytes, potentially via promoting localization of DSG1 at desmosome cell junctions. Required for calcium-independent development and maturation of desmosome plaques specifically at lateral cell-cell contacts in differentiating keratinocytes. Plays a role in the maintenance of DSG3 protein abundance, DSG3 clustering and localization of these clusters to the cell membrane in keratinocytes. May also promote keratinocyte proliferation and morphogenesis during postnatal development. Required for tight junction inside-out transepidermal barrier function of the skin. Promotes Wnt-mediated proliferation and differentiation of ameloblasts, via facilitating TJP1/ZO-1 localization to tight junctions. Binds single-stranded DNA (ssDNA), and may thereby play a role in sensing DNA damage and promoting cell survival. Positively regulates cap-dependent translation and as a result cell proliferation, via recruitment of EIF4A1 to the initiation complex and promotion of EIF4A1 ATPase activity. Regulates the mRNA stability and protein abundance of desmosome components PKP2, PKP3, DSC2 and DSP, potentially via its interaction with FXR1. May facilitate the formation of intermediate filaments. The chain is Plakophilin-1 (PKP1) from Bos taurus (Bovine).